The primary structure comprises 153 residues: UPF0756 membrane protein Bcer98_3279 (153 aa).

4 helical membrane passes run 8-28, 54-74, 87-107, and 117-137; these read FLFILLIIGLIAKNQSLIVAI, LGVTVITIAVLVPIATGEIGF, WIALASGIAVALLAKGGLQLL, and LVFGTIIAVALFNGVAVGPLI.

The protein belongs to the UPF0756 family.

It is found in the cell membrane. The protein is UPF0756 membrane protein Bcer98_3279 of Bacillus cytotoxicus (strain DSM 22905 / CIP 110041 / 391-98 / NVH 391-98).